The primary structure comprises 314 residues: Pectin lyase (314 aa).

Residue R202 is part of the active site.

It belongs to the polysaccharide lyase 1 family.

It catalyses the reaction Eliminative cleavage of (1-&gt;4)-alpha-D-galacturonan methyl ester to give oligosaccharides with 4-deoxy-6-O-methyl-alpha-D-galact-4-enuronosyl groups at their non-reducing ends.. This Pectobacterium carotovorum (Erwinia carotovora) protein is Pectin lyase (pnl).